The following is a 487-amino-acid chain: UDP-N-acetylmuramate--L-alanine ligase (487 aa).

An ATP-binding site is contributed by 129–135 (GTHGKTT).

The protein belongs to the MurCDEF family.

It localises to the cytoplasm. The enzyme catalyses UDP-N-acetyl-alpha-D-muramate + L-alanine + ATP = UDP-N-acetyl-alpha-D-muramoyl-L-alanine + ADP + phosphate + H(+). It participates in cell wall biogenesis; peptidoglycan biosynthesis. Cell wall formation. The sequence is that of UDP-N-acetylmuramate--L-alanine ligase from Aliivibrio fischeri (strain ATCC 700601 / ES114) (Vibrio fischeri).